The primary structure comprises 400 residues: Subtilisin-like protease 11 (400 aa).

The signal sequence occupies residues 1–19 (MGLFKVIFTAVAALSAVDA). Positions 20-117 (AELLSSAKSK…VEHDRHVYIS (98 aa)) are excised as a propeptide. One can recognise an Inhibitor I9 domain in the interval 35–116 (SYLVVMKDSV…FVEHDRHVYI (82 aa)). Positions 127-400 (SWGLGRVSHR…NKLLYNGSGK (274 aa)) constitute a Peptidase S8 domain. N-linked (GlcNAc...) asparagine glycosylation occurs at Asn138. Asp159 acts as the Charge relay system in catalysis. Asn181 carries N-linked (GlcNAc...) asparagine glycosylation. Residue His191 is the Charge relay system of the active site. N-linked (GlcNAc...) asparagine glycans are attached at residues Asn252 and Asn337. Ser346 (charge relay system) is an active-site residue. Residues Asn388 and Asn396 are each glycosylated (N-linked (GlcNAc...) asparagine).

This sequence belongs to the peptidase S8 family.

The protein resides in the secreted. In terms of biological role, secreted subtilisin-like serine protease with keratinolytic activity that contributes to pathogenicity. This Arthroderma benhamiae (strain ATCC MYA-4681 / CBS 112371) (Trichophyton mentagrophytes) protein is Subtilisin-like protease 11 (SUB11).